The sequence spans 127 residues: Holo-[acyl-carrier-protein] synthase (127 aa).

Mg(2+) contacts are provided by D8 and E56.

Belongs to the P-Pant transferase superfamily. AcpS family. The cofactor is Mg(2+).

The protein resides in the cytoplasm. The catalysed reaction is apo-[ACP] + CoA = holo-[ACP] + adenosine 3',5'-bisphosphate + H(+). In terms of biological role, transfers the 4'-phosphopantetheine moiety from coenzyme A to a Ser of acyl-carrier-protein. The polypeptide is Holo-[acyl-carrier-protein] synthase (Cytophaga hutchinsonii (strain ATCC 33406 / DSM 1761 / CIP 103989 / NBRC 15051 / NCIMB 9469 / D465)).